The chain runs to 29 residues: Cytochrome b6-f complex subunit 8 (29 aa).

A helical transmembrane segment spans residues 3 to 23 (IITFGWVAVAAFFALSIAFVV).

This sequence belongs to the PetN family. As to quaternary structure, the 4 large subunits of the cytochrome b6-f complex are cytochrome b6, subunit IV (17 kDa polypeptide, PetD), cytochrome f and the Rieske protein, while the 4 small subunits are PetG, PetL, PetM and PetN. The complex functions as a dimer.

The protein resides in the cellular thylakoid membrane. In terms of biological role, component of the cytochrome b6-f complex, which mediates electron transfer between photosystem II (PSII) and photosystem I (PSI), cyclic electron flow around PSI, and state transitions. The sequence is that of Cytochrome b6-f complex subunit 8 from Synechococcus sp. (strain JA-3-3Ab) (Cyanobacteria bacterium Yellowstone A-Prime).